The following is a 43-amino-acid chain: MVCKGCGTNCKCQDTKCGDNCACNQDCKCVCKNGPKDQCCKSK.

It belongs to the metallothionein superfamily. Type 5 family.

This protein binds cations of several transition elements. Thought to be involved in metal ion homeostasis. The polypeptide is Metallothionein-3 (MtnC) (Drosophila melanogaster (Fruit fly)).